A 194-amino-acid polypeptide reads, in one-letter code: NADPH-flavin oxidoreductase (194 aa).

This sequence belongs to the non-flavoprotein flavin reductase family. Homodimer. It can form an isobutylamine N-hydroxylase two component enzyme system formed of a flavin reductase component (VlmR) and a monooxygenase component (VlmH).

The enzyme catalyses FADH2 + NADP(+) = FAD + NADPH + 2 H(+). The catalysed reaction is FMNH2 + NADP(+) = FMN + NADPH + 2 H(+). In terms of biological role, involved in the biosynthesis of the azoxy antibiotic valanimycin, which has an antitumor activity. Catalyzes the reduction of FAD/FMN to FADH(2)/FMNH(2) which are subsequently used for the hydroxylation of isobutylamine by the isobutylamine N-hydroxylase VlmH. It can reduce either FAD or flavin mononucleotide (FMN) but prefers FAD. The enzyme has a strong preference for NADPH as acceptor. In Streptomyces viridifaciens, this protein is NADPH-flavin oxidoreductase.